Here is a 171-residue protein sequence, read N- to C-terminus: MTKQHSFEREELLQCSQGELFGPGNAQLPAPNMLMLDRVVRICEEGGHYGKGELIAELDIHPDLWFFDCHFPGDPVMPGCLGLDAMWQLVGFHLGWLGHPGRGRALGCGEVKFSGQILPDANKVTYHIHMKRVITRRLILGIADGTVSVDGREIYQANDLRVGLFTSTANF.

Histidine 70 is a catalytic residue.

The protein belongs to the thioester dehydratase family. FabA subfamily. Homodimer.

The protein resides in the cytoplasm. It carries out the reaction a (3R)-hydroxyacyl-[ACP] = a (2E)-enoyl-[ACP] + H2O. It catalyses the reaction (3R)-hydroxydecanoyl-[ACP] = (2E)-decenoyl-[ACP] + H2O. The catalysed reaction is (2E)-decenoyl-[ACP] = (3Z)-decenoyl-[ACP]. It participates in lipid metabolism; fatty acid biosynthesis. In terms of biological role, necessary for the introduction of cis unsaturation into fatty acids. Catalyzes the dehydration of (3R)-3-hydroxydecanoyl-ACP to E-(2)-decenoyl-ACP and then its isomerization to Z-(3)-decenoyl-ACP. Can catalyze the dehydratase reaction for beta-hydroxyacyl-ACPs with saturated chain lengths up to 16:0, being most active on intermediate chain length. In Chromohalobacter salexigens (strain ATCC BAA-138 / DSM 3043 / CIP 106854 / NCIMB 13768 / 1H11), this protein is 3-hydroxydecanoyl-[acyl-carrier-protein] dehydratase.